The sequence spans 275 residues: MTRQFGLIGHPLGHSKSPVMHEAAYKDMGLDAVYCAYDISPQELGNAIRTMKAQGIDGFNVTIPHKVAIIDYLDEIDEDAEAMGAVNTVVCQDGRWVGKNTDADGYIESLLPVVSDQSLTGRRVLVIGAGGAARAVIHALGKQRATISVSNRTAEKAQELAQLFSHLTIEAIPLNEAESTLGTYDVLINTTSVGMYPDTSKQPIALDRLKQATIVSDLIYNPYETALLQEAKQRGNRILNGIGMFVNQGALSIEHWTGRKPNRKCMERVVRMHLT.

Shikimate contacts are provided by residues 15 to 17 and Thr62; that span reads SKS. The active-site Proton acceptor is the Lys66. Glu78 is an NADP(+) binding site. Positions 87 and 102 each coordinate shikimate. NADP(+) is bound by residues 128 to 132, 151 to 156, and Leu218; these read GAGGA and NRTAEK. Tyr220 serves as a coordination point for shikimate. Gly241 serves as a coordination point for NADP(+).

The protein belongs to the shikimate dehydrogenase family. In terms of assembly, homodimer.

It carries out the reaction shikimate + NADP(+) = 3-dehydroshikimate + NADPH + H(+). It functions in the pathway metabolic intermediate biosynthesis; chorismate biosynthesis; chorismate from D-erythrose 4-phosphate and phosphoenolpyruvate: step 4/7. In terms of biological role, involved in the biosynthesis of the chorismate, which leads to the biosynthesis of aromatic amino acids. Catalyzes the reversible NADPH linked reduction of 3-dehydroshikimate (DHSA) to yield shikimate (SA). This is Shikimate dehydrogenase (NADP(+)) from Shouchella clausii (strain KSM-K16) (Alkalihalobacillus clausii).